Consider the following 703-residue polypeptide: Phosphoribosylformylglycinamidine synthase subunit PurL (703 aa).

His-36 is an active-site residue. Tyr-39 and Lys-80 together coordinate ATP. Glu-82 lines the Mg(2+) pocket. Substrate is bound by residues 83 to 86 and Arg-105; that span reads SHNH. Catalysis depends on His-84, which acts as the Proton acceptor. Mg(2+) is bound at residue Asp-106. Gln-226 is a binding site for substrate. Asp-252 provides a ligand contact to Mg(2+). A substrate-binding site is contributed by 294–296; it reads ETQ. ATP contacts are provided by Asp-468 and Gly-505. Ser-508 lines the substrate pocket.

The protein belongs to the FGAMS family. As to quaternary structure, monomer. Part of the FGAM synthase complex composed of 1 PurL, 1 PurQ and 2 PurS subunits.

Its subcellular location is the cytoplasm. The catalysed reaction is N(2)-formyl-N(1)-(5-phospho-beta-D-ribosyl)glycinamide + L-glutamine + ATP + H2O = 2-formamido-N(1)-(5-O-phospho-beta-D-ribosyl)acetamidine + L-glutamate + ADP + phosphate + H(+). Its pathway is purine metabolism; IMP biosynthesis via de novo pathway; 5-amino-1-(5-phospho-D-ribosyl)imidazole from N(2)-formyl-N(1)-(5-phospho-D-ribosyl)glycinamide: step 1/2. In terms of biological role, part of the phosphoribosylformylglycinamidine synthase complex involved in the purines biosynthetic pathway. Catalyzes the ATP-dependent conversion of formylglycinamide ribonucleotide (FGAR) and glutamine to yield formylglycinamidine ribonucleotide (FGAM) and glutamate. The FGAM synthase complex is composed of three subunits. PurQ produces an ammonia molecule by converting glutamine to glutamate. PurL transfers the ammonia molecule to FGAR to form FGAM in an ATP-dependent manner. PurS interacts with PurQ and PurL and is thought to assist in the transfer of the ammonia molecule from PurQ to PurL. The chain is Phosphoribosylformylglycinamidine synthase subunit PurL from Sulfurisphaera tokodaii (strain DSM 16993 / JCM 10545 / NBRC 100140 / 7) (Sulfolobus tokodaii).